We begin with the raw amino-acid sequence, 428 residues long: UPF0229 protein YeaH (428 aa).

A compositionally biased stretch (basic and acidic residues) spans 78-90 (GNDHFIQNDRIER). The disordered stretch occupies residues 78–111 (GNDHFIQNDRIERPQGGGGGGSGSGQGQASQDGE). Residues 92 to 103 (QGGGGGGSGSGQ) are compositionally biased toward gly residues.

It belongs to the UPF0229 family.

The polypeptide is UPF0229 protein YeaH (Salmonella enteritidis PT4 (strain P125109)).